The following is a 926-amino-acid chain: Armadillo repeat-containing protein 5 (926 aa).

The span at 82-104 (PAPSQAASGSAPSSVASAGSTPG) shows a compositional bias: low complexity. A disordered region spans residues 82-111 (PAPSQAASGSAPSSVASAGSTPGHAPAAES). ARM repeat units lie at residues 139–179 (GACR…NLAM), 181–221 (PESC…NLAD), 223–263 (PQHR…ELSR), 267–306 (RACA…NLCA), 307–354 (QGLV…LCRE), 355–399 (AINR…DTGA), and 401–440 (GKLQ…EERT). Position 337 is a phosphoserine (serine 337). Residues 472–516 (WSPERCPMPEPSESVSPTPGQTSMSTPRTLRKPGRIPAATPEEPW) are disordered. The segment covering 484-499 (ESVSPTPGQTSMSTPR) has biased composition (polar residues). In terms of domain architecture, BTB spans 745–813 (PDLHFVLDSG…LHGCRGCGAA (69 aa)).

As to quaternary structure, substrate-recognition component of the BCR(ARMC5) E3 ubiquitin ligase complex, at least composed of CUL3, ARMC5 and RBX1. Ubiquitinated by a BCR (BTB-CUL3-RBX1) E3 ubiquitin ligase complex, leading to its degradation. Deubiquitinated by USP7. Expression is high in the thymus, stomach, bone marrow and lymphatic tissues (including lymph nodes and intestinal wall). Also expressed in the adrenal gland, skin and in brain structures, with noticeable levels found in the cerebellum.

It is found in the nucleus. The protein resides in the chromosome. Its subcellular location is the cytoplasm. Its pathway is protein modification; protein ubiquitination. In terms of biological role, substrate-recognition component of a BCR (BTB-CUL3-RBX1) E3 ubiquitin ligase complex that terminates RNA polymerase II (Pol II) transcription in the promoter-proximal region of genes. The BCR(ARMC5) complex provides a quality checkpoint during transcription elongation by driving premature transcription termination of transcripts that are unfavorably configured for transcriptional elongation: the BCR(ARMC5) complex acts by mediating ubiquitination of Pol II subunit POLR2A phosphorylated at 'Ser-5' of the C-terminal domain (CTD), leading to POLR2A degradation. The BCR(ARMC5) complex acts in parallel of the integrator complex and is specific for RNA Pol II originating from the promoter-proximal zone: it does not ubiquitinate elongation-stalled RNA Pol II. The BCR(ARMC5) complex also acts as a regulator of fatty acid desaturation by mediating ubiquitination and degradation of SCAP-free SREBF1 and SREBF2. Involved in fetal development, T-cell function and adrenal gland growth homeostasis. Plays a role in steroidogenesis, modulates steroidogenic enzymes expression and cortisol production. The polypeptide is Armadillo repeat-containing protein 5 (Mus musculus (Mouse)).